We begin with the raw amino-acid sequence, 556 residues long: MNPSTTQARVVVDELIRGGVRDVVLCPGSRNAPLAFALQDADHAGRIRLHVRIDERTAGYLAIGLAVAAGAPVCVAMTSGTAVANLGPAVVEANYARVPLIVLSANRPYELLGTGANQTMEQLGYFGTQVRAAISLGLAEDAPERLDSLNATWRSATCRVLVAATGSRTANAGPVQFDIPLREPLIPDPEPHGAITPQGRPGGKPWTYIPQVTFDQPLEIDLSADTVVIAGHGAGVHPNLTELPIVAEPTAPFGPYRPYPLHPLALPLLHPKQVIMLGRPTLHRPVSALLADPQVPVYALTTGPCWPDVSGNSQAAGTRAVTTGTPHPAWLQRCAEMNQHAISTVRSQLAAHPLITGLHVAAAVADALRPGDQLVLGASNPVRDMALVGLSTDGIQVRSNRGVAGIDGTVSTAIGAALAYERSPGYAGSTDRPARTVALIGDLAFVHDSSGLLIGPTEPTPQQLKIVVSNDNGGGIFELLEQGDPRLSAVSSRIFGTPHDVDVGALCRAYHVEGRQIEVDKLREALDEPGVGMRVLEVKADRSSLRQLHAAITATL.

The protein belongs to the TPP enzyme family. MenD subfamily. As to quaternary structure, homodimer. Mg(2+) is required as a cofactor. Requires Mn(2+) as cofactor. It depends on thiamine diphosphate as a cofactor.

The enzyme catalyses isochorismate + 2-oxoglutarate + H(+) = 5-enolpyruvoyl-6-hydroxy-2-succinyl-cyclohex-3-ene-1-carboxylate + CO2. Its pathway is quinol/quinone metabolism; 1,4-dihydroxy-2-naphthoate biosynthesis; 1,4-dihydroxy-2-naphthoate from chorismate: step 2/7. It participates in quinol/quinone metabolism; menaquinone biosynthesis. Functionally, catalyzes the thiamine diphosphate-dependent decarboxylation of 2-oxoglutarate and the subsequent addition of the resulting succinic semialdehyde-thiamine pyrophosphate anion to isochorismate to yield 2-succinyl-5-enolpyruvyl-6-hydroxy-3-cyclohexene-1-carboxylate (SEPHCHC). The polypeptide is 2-succinyl-5-enolpyruvyl-6-hydroxy-3-cyclohexene-1-carboxylate synthase (Mycobacterium leprae (strain Br4923)).